Reading from the N-terminus, the 660-residue chain is Nuclear factor erythroid 2-related factor 3 (660 aa).

Residues 120 to 214 (SAVGDGGQSA…KTEEHKMACA (95 aa)) form a disordered region. Positions 123–135 (GDGGQSASAGGGD) are enriched in gly residues. Composition is skewed to basic and acidic residues over residues 173–186 (MLRE…HSSQ) and 204–214 (SKTEEHKMACA). The 64-residue stretch at 541–604 (LIRDIRRRGK…DIMRQKLHGL (64 aa)) folds into the bZIP domain. The segment at 543–562 (RDIRRRGKNKVAAQNCRKRK) is basic motif. A leucine-zipper region spans residues 566 to 573 (ILNLEDDI).

It belongs to the bZIP family. CNC subfamily. In terms of assembly, heterodimer with MAFG, MAFK and other small MAF proteins that binds to the MAF recognition elements (MARE). In terms of tissue distribution, high level expression in brain, thymus, testis and placenta. Medium level expression in uterus, stomach and lung. Low level expression in kidney. No expression in heart, liver, spleen and ovary.

Its subcellular location is the nucleus. Its function is as follows. Activates erythroid-specific, globin gene expression. This chain is Nuclear factor erythroid 2-related factor 3 (Nfe2l3), found in Mus musculus (Mouse).